A 245-amino-acid chain; its full sequence is tRNA1(Val) (adenine(37)-N6)-methyltransferase (245 aa).

The protein belongs to the methyltransferase superfamily. tRNA (adenine-N(6)-)-methyltransferase family.

Its subcellular location is the cytoplasm. It carries out the reaction adenosine(37) in tRNA1(Val) + S-adenosyl-L-methionine = N(6)-methyladenosine(37) in tRNA1(Val) + S-adenosyl-L-homocysteine + H(+). Functionally, specifically methylates the adenine in position 37 of tRNA(1)(Val) (anticodon cmo5UAC). The sequence is that of tRNA1(Val) (adenine(37)-N6)-methyltransferase from Escherichia coli (strain SE11).